We begin with the raw amino-acid sequence, 233 residues long: 5'-methylthioadenosine/S-adenosylhomocysteine nucleosidase (233 aa).

The active-site Proton acceptor is the E12. Substrate is bound by residues G78, I152, and 173–174; that span reads ME. Catalysis depends on D197, which acts as the Proton donor.

This sequence belongs to the PNP/UDP phosphorylase family. MtnN subfamily. In terms of assembly, homodimer.

It carries out the reaction S-adenosyl-L-homocysteine + H2O = S-(5-deoxy-D-ribos-5-yl)-L-homocysteine + adenine. The catalysed reaction is S-methyl-5'-thioadenosine + H2O = 5-(methylsulfanyl)-D-ribose + adenine. The enzyme catalyses 5'-deoxyadenosine + H2O = 5-deoxy-D-ribose + adenine. It functions in the pathway amino-acid biosynthesis; L-methionine biosynthesis via salvage pathway; S-methyl-5-thio-alpha-D-ribose 1-phosphate from S-methyl-5'-thioadenosine (hydrolase route): step 1/2. In terms of biological role, catalyzes the irreversible cleavage of the glycosidic bond in both 5'-methylthioadenosine (MTA) and S-adenosylhomocysteine (SAH/AdoHcy) to adenine and the corresponding thioribose, 5'-methylthioribose and S-ribosylhomocysteine, respectively. Also cleaves 5'-deoxyadenosine, a toxic by-product of radical S-adenosylmethionine (SAM) enzymes, into 5-deoxyribose and adenine. Thus, is required for in vivo function of the radical SAM enzymes biotin synthase and lipoic acid synthase, that are inhibited by 5'-deoxyadenosine accumulation. The sequence is that of 5'-methylthioadenosine/S-adenosylhomocysteine nucleosidase from Yersinia pestis bv. Antiqua (strain Antiqua).